Consider the following 129-residue polypeptide: ATP synthase epsilon chain (129 aa).

The protein belongs to the ATPase epsilon chain family. F-type ATPases have 2 components, CF(1) - the catalytic core - and CF(0) - the membrane proton channel. CF(1) has five subunits: alpha(3), beta(3), gamma(1), delta(1), epsilon(1). CF(0) has three main subunits: a, b and c.

The protein localises to the cell inner membrane. Its function is as follows. Produces ATP from ADP in the presence of a proton gradient across the membrane. In Campylobacter curvus (strain 525.92), this protein is ATP synthase epsilon chain.